Reading from the N-terminus, the 296-residue chain is Glycine--tRNA ligase alpha subunit (296 aa).

The protein belongs to the class-II aminoacyl-tRNA synthetase family. Tetramer of two alpha and two beta subunits.

It is found in the cytoplasm. The enzyme catalyses tRNA(Gly) + glycine + ATP = glycyl-tRNA(Gly) + AMP + diphosphate. In Exiguobacterium sibiricum (strain DSM 17290 / CCUG 55495 / CIP 109462 / JCM 13490 / 255-15), this protein is Glycine--tRNA ligase alpha subunit.